The sequence spans 640 residues: 1,4-alpha-glucan branching enzyme GlgB (640 aa).

The active-site Nucleophile is the Asp318. Glu371 acts as the Proton donor in catalysis.

It belongs to the glycosyl hydrolase 13 family. GlgB subfamily. Monomer.

It carries out the reaction Transfers a segment of a (1-&gt;4)-alpha-D-glucan chain to a primary hydroxy group in a similar glucan chain.. It functions in the pathway glycan biosynthesis; glycogen biosynthesis. Its function is as follows. Catalyzes the formation of the alpha-1,6-glucosidic linkages in glycogen by scission of a 1,4-alpha-linked oligosaccharide from growing alpha-1,4-glucan chains and the subsequent attachment of the oligosaccharide to the alpha-1,6 position. This is 1,4-alpha-glucan branching enzyme GlgB from Francisella tularensis subsp. novicida (strain U112).